The following is an 88-amino-acid chain: Putative membrane protein insertion efficiency factor (88 aa).

The interval 64–88 (GVDPVPKKSSSKKTSSTTACGCGHS) is disordered.

This sequence belongs to the UPF0161 family.

Its subcellular location is the cell inner membrane. Functionally, could be involved in insertion of integral membrane proteins into the membrane. The polypeptide is Putative membrane protein insertion efficiency factor (Herminiimonas arsenicoxydans).